Reading from the N-terminus, the 339-residue chain is N-acetyl-gamma-glutamyl-phosphate reductase (339 aa).

Residue C145 is part of the active site.

The protein belongs to the NAGSA dehydrogenase family. Type 1 subfamily.

The protein resides in the cytoplasm. The enzyme catalyses N-acetyl-L-glutamate 5-semialdehyde + phosphate + NADP(+) = N-acetyl-L-glutamyl 5-phosphate + NADPH + H(+). It participates in amino-acid biosynthesis; L-arginine biosynthesis; N(2)-acetyl-L-ornithine from L-glutamate: step 3/4. Its function is as follows. Catalyzes the NADPH-dependent reduction of N-acetyl-5-glutamyl phosphate to yield N-acetyl-L-glutamate 5-semialdehyde. This Thermotoga maritima (strain ATCC 43589 / DSM 3109 / JCM 10099 / NBRC 100826 / MSB8) protein is N-acetyl-gamma-glutamyl-phosphate reductase.